Here is a 187-residue protein sequence, read N- to C-terminus: Acireductone dioxygenase (187 aa).

Fe(2+) contacts are provided by histidine 90, histidine 92, glutamate 96, and histidine 135. Ni(2+) contacts are provided by histidine 90, histidine 92, glutamate 96, and histidine 135.

The protein belongs to the acireductone dioxygenase (ARD) family. The cofactor is Fe(2+). Requires Ni(2+) as cofactor.

Its subcellular location is the cytoplasm. The protein localises to the nucleus. The catalysed reaction is 1,2-dihydroxy-5-(methylsulfanyl)pent-1-en-3-one + O2 = 4-methylsulfanyl-2-oxobutanoate + formate + 2 H(+). The enzyme catalyses 1,2-dihydroxy-5-(methylsulfanyl)pent-1-en-3-one + O2 = 3-(methylsulfanyl)propanoate + CO + formate + 2 H(+). It participates in amino-acid biosynthesis; L-methionine biosynthesis via salvage pathway; L-methionine from S-methyl-5-thio-alpha-D-ribose 1-phosphate: step 5/6. Its function is as follows. Catalyzes 2 different reactions between oxygen and the acireductone 1,2-dihydroxy-3-keto-5-methylthiopentene (DHK-MTPene) depending upon the metal bound in the active site. Fe-containing acireductone dioxygenase (Fe-ARD) produces formate and 2-keto-4-methylthiobutyrate (KMTB), the alpha-ketoacid precursor of methionine in the methionine recycle pathway. Ni-containing acireductone dioxygenase (Ni-ARD) produces methylthiopropionate, carbon monoxide and formate, and does not lie on the methionine recycle pathway. This is Acireductone dioxygenase from Drosophila pseudoobscura pseudoobscura (Fruit fly).